The following is a 598-amino-acid chain: MSDLSHIRNFSIIAHIDHGKSTLADRFIQMCGGLAEREMEAQVLDSMDLERERGITIKAHSVTLYYKAKDGVTYQLNFIDTPGHVDFTYEVSRSLAACEGALLVVDAGQGVEAQSVANCYTAIEQGLEVMPVLNKIDLPQAEPDRVKDEIEKIIGIDATDAVTCSAKTGLGVDEVLERLVATIPAPIGNIEDPLQALIIDSWFDNYLGVVSLVRVRHGRVKKGDKILVKSTGKVHLVDSVGVFNPKHTATADLKAGEVGFIIASIKDIHGAPVGDTLTLSSTPDVPVLPGFKRIQPQVYAGLFPVSSDDFEDFREALQKLTLNDSSLQYTPESSDALGFGFRCGFLGMLHMEIIQERLEREYDLDLITTAPTVIFELVLKTGETIYVDNPSKLPDVSSIEDMREPIVRANILVPQEHLGNVITLCIEKRGVQVDMLFLGNQVQVTYDLPMNEVVLDFFDRLKSTSRGYASLDYHFDRYQSANLVKLDVLINGDKVDALALIVHRDNSHFKGRQLTEKMKELIPRQMFDVAIQAAIGGQIVARTTVKALRKNVLAKCYGGDVSRKKKLLEKQKAGKKRMKQVGNVEIPQEAFLAVLRLE.

One can recognise a tr-type G domain in the interval 5–187 (SHIRNFSIIA…RLVATIPAPI (183 aa)). GTP contacts are provided by residues 17-22 (DHGKST) and 134-137 (NKID).

It belongs to the TRAFAC class translation factor GTPase superfamily. Classic translation factor GTPase family. LepA subfamily.

The protein localises to the cell inner membrane. The enzyme catalyses GTP + H2O = GDP + phosphate + H(+). In terms of biological role, required for accurate and efficient protein synthesis under certain stress conditions. May act as a fidelity factor of the translation reaction, by catalyzing a one-codon backward translocation of tRNAs on improperly translocated ribosomes. Back-translocation proceeds from a post-translocation (POST) complex to a pre-translocation (PRE) complex, thus giving elongation factor G a second chance to translocate the tRNAs correctly. Binds to ribosomes in a GTP-dependent manner. The sequence is that of Elongation factor 4 from Pseudomonas fluorescens (strain Pf0-1).